Here is a 65-residue protein sequence, read N- to C-terminus: Protein translocase subunit SecE (65 aa).

At 1–34 (MEKLRKFFREVIAEAKKISWPSRKELLTSFGVVL) the chain is on the cytoplasmic side. The helical transmembrane segment at 35-51 (VILAVTSVYFFVLDFIF) threads the bilayer. Residues 52–65 (SGVVSAIFKALGIG) are Extracellular-facing.

Belongs to the SecE/SEC61-gamma family. As to quaternary structure, component of the Sec protein translocase complex. Heterotrimer consisting of SecY, SecE and SecG subunits. The heterotrimers can form oligomers, although 1 heterotrimer is thought to be able to translocate proteins. Interacts with SecDF, and other proteins may be involved. The channel interacts with SecA via subunit SecY.

The protein resides in the cell inner membrane. Its function is as follows. Essential subunit of the protein translocation channel SecYEG. Clamps together the 2 halves of SecY. May contact the channel plug during translocation. The chain is Protein translocase subunit SecE from Thermotoga maritima (strain ATCC 43589 / DSM 3109 / JCM 10099 / NBRC 100826 / MSB8).